The sequence spans 352 residues: Small ribosomal subunit biogenesis GTPase RsgA (352 aa).

Residues 1–21 (MKKNKLSKNQHRRIQAHHQYR) show a composition bias toward basic residues. The tract at residues 1-38 (MKKNKLSKNQHRRIQAHHQYRLHPTSLTDDKNNQLDDA) is disordered. The CP-type G domain maps to 116-278 (FYDGIKPMAA…LIDSPGIREF (163 aa)). Residues 164-167 (NKID) and 218-226 (GQSGVGKSS) contribute to the GTP site. Zn(2+) contacts are provided by Cys302, Cys307, His309, and Cys315.

This sequence belongs to the TRAFAC class YlqF/YawG GTPase family. RsgA subfamily. In terms of assembly, monomer. Associates with 30S ribosomal subunit, binds 16S rRNA. The cofactor is Zn(2+).

Its subcellular location is the cytoplasm. One of several proteins that assist in the late maturation steps of the functional core of the 30S ribosomal subunit. Helps release RbfA from mature subunits. May play a role in the assembly of ribosomal proteins into the subunit. Circularly permuted GTPase that catalyzes slow GTP hydrolysis, GTPase activity is stimulated by the 30S ribosomal subunit. The polypeptide is Small ribosomal subunit biogenesis GTPase RsgA (Hamiltonella defensa subsp. Acyrthosiphon pisum (strain 5AT)).